The sequence spans 181 residues: MPKGCLVITVSGLAGSGTTTLCRNLAKHYGFKHVYAGLIFRQMAKERGMSLEEFQKYAELHPEIDREVDRRQVEAAKECNVVIEGRLAGWMVKNADLKIWLDAPIRVRAERVAKREGISVEEAFMKIAEREMQNRKRYLNLYGIDINDLSIYDLIIDTSKWSPEGVFAIVKAAIDHLYEKV.

12–20 (GLAGSGTTT) is a binding site for ATP.

It belongs to the cytidylate kinase family. Type 2 subfamily.

The protein resides in the cytoplasm. It catalyses the reaction CMP + ATP = CDP + ADP. It carries out the reaction dCMP + ATP = dCDP + ADP. The polypeptide is Cytidylate kinase (cmk) (Pyrococcus abyssi (strain GE5 / Orsay)).